The chain runs to 338 residues: Mitochondrial amidoxime reducing component 2 (338 aa).

The transit peptide at 1-35 (MGSSSSTALARLGLPGQPRSTWLGVAALGLAAVAL) directs the protein to the mitochondrion. Glycyl lysine isopeptide (Lys-Gly) (interchain with G-Cter in ubiquitin) cross-links involve residues K59, K138, and K144. N6-acetyllysine; alternate is present on K156. A Glycyl lysine isopeptide (Lys-Gly) (interchain with G-Cter in ubiquitin); alternate cross-link involves residue K156. Residues K173, K187, K289, and K296 each participate in a glycyl lysine isopeptide (Lys-Gly) (interchain with G-Cter in ubiquitin) cross-link. In terms of domain architecture, MOSC spans 188–336 (GRTTKKLYPS…LRVGDPVYRM (149 aa)).

As to quaternary structure, component of a complex composed of cytochrome b5, NADH-cytochrome b5 reductase (CYB5R3) and MTARC2. Mo-molybdopterin is required as a cofactor. Ubiquitinated by PRKN during mitophagy, leading to its degradation and enhancement of mitophagy. Deubiquitinated by USP30.

Its subcellular location is the mitochondrion outer membrane. It is found in the peroxisome. It carries out the reaction N(omega)-hydroxy-L-arginine + 2 Fe(II)-[cytochrome b5] + 2 H(+) = L-arginine + 2 Fe(III)-[cytochrome b5] + H2O. Catalyzes the reduction of N-oxygenated molecules, acting as a counterpart of cytochrome P450 and flavin-containing monooxygenases in metabolic cycles. As a component of prodrug-converting system, reduces a multitude of N-hydroxylated prodrugs particularly amidoximes, leading to increased drug bioavailability. May be involved in mitochondrial N(omega)-hydroxy-L-arginine (NOHA) reduction, regulating endogenous nitric oxide levels and biosynthesis. Postulated to cleave the N-OH bond of N-hydroxylated substrates in concert with electron transfer from NADH to cytochrome b5 reductase then to cytochrome b5, the ultimate electron donor that primes the active site for substrate reduction. The chain is Mitochondrial amidoxime reducing component 2 (Mtarc2) from Rattus norvegicus (Rat).